Reading from the N-terminus, the 312-residue chain is Coiled-coil domain-containing protein 160 homolog (312 aa).

A coiled-coil region spans residues 126-281 (SEGAKFKNQL…EERKREKTHS (156 aa)).

The protein belongs to the CCDC160 family.

The protein is Coiled-coil domain-containing protein 160 homolog of Xenopus tropicalis (Western clawed frog).